The following is a 251-amino-acid chain: ATP synthase subunit a, chloroplastic (251 aa).

The next 6 membrane-spanning stretches (helical) occupy residues I3 to V23, I38 to I58, V99 to I119, I138 to N158, L203 to L223, and G224 to G244.

This sequence belongs to the ATPase A chain family. As to quaternary structure, F-type ATPases have 2 components, CF(1) - the catalytic core - and CF(0) - the membrane proton channel. CF(1) has five subunits: alpha(3), beta(3), gamma(1), delta(1), epsilon(1). CF(0) has four main subunits: a, b, b' and c.

It is found in the plastid. It localises to the chloroplast thylakoid membrane. Its function is as follows. Key component of the proton channel; it plays a direct role in the translocation of protons across the membrane. The protein is ATP synthase subunit a, chloroplastic of Euglena gracilis.